We begin with the raw amino-acid sequence, 67 residues long: Large ribosomal subunit protein uL29 (67 aa).

Belongs to the universal ribosomal protein uL29 family.

The chain is Large ribosomal subunit protein uL29 from Rhizorhabdus wittichii (strain DSM 6014 / CCUG 31198 / JCM 15750 / NBRC 105917 / EY 4224 / RW1) (Sphingomonas wittichii).